The sequence spans 105 residues: Large ribosomal subunit protein uL24 (105 aa).

This sequence belongs to the universal ribosomal protein uL24 family. In terms of assembly, part of the 50S ribosomal subunit.

One of two assembly initiator proteins, it binds directly to the 5'-end of the 23S rRNA, where it nucleates assembly of the 50S subunit. Functionally, one of the proteins that surrounds the polypeptide exit tunnel on the outside of the subunit. This chain is Large ribosomal subunit protein uL24, found in Xanthomonas campestris pv. campestris (strain 8004).